Consider the following 2620-residue polypeptide: Ankyrin repeat and KH domain-containing protein mask-1 (2620 aa).

ANK repeat units lie at residues Ser-254–Val-283, Asn-288–Asp-318, Glu-361–Pro-390, Glu-402–Leu-431, Ile-437–Glu-466, Lys-470–Val-502, Thr-507–Ala-536, Lys-538–Gln-566, Gln-568–Phe-597, Asp-600–Phe-629, Asn-634–Leu-663, and Asp-667–Met-697. 3 disordered regions span residues Lys-699–Asp-726, His-994–Ala-1032, and Ser-1192–Lys-1229. The segment covering Thr-1012 to Gln-1029 has biased composition (polar residues). Low complexity predominate over residues Ser-1192–Gln-1206. Over residues Thr-1210–Lys-1221 the composition is skewed to basic and acidic residues. ANK repeat units follow at residues Thr-1234–His-1263, Lys-1267–Ala-1296, Thr-1301–His-1330, Ser-1334–Ser-1363, Leu-1369–Ala-1398, Asn-1403–His-1432, Thr-1436–Ala-1465, Thr-1471–Val-1500, Lys-1504–Met-1533, and Arg-1537–Asn-1566. The stretch at Ala-1596–Glu-1648 forms a coiled coil. 2 disordered regions span residues Gln-1621 to Pro-1720 and Lys-1759 to Thr-1804. Basic and acidic residues predominate over residues Lys-1636–Ala-1647. Residues Glu-1648–Pro-1661 show a composition bias toward acidic residues. 2 stretches are compositionally biased toward low complexity: residues Pro-1665–Glu-1681 and Lys-1769–Ser-1791. In terms of domain architecture, KH spans Glu-1807–Ile-1873. Residues Ala-1899–Asp-1913 are compositionally biased toward polar residues. Disordered regions lie at residues Ala-1899–Trp-1962, Leu-1976–Glu-2010, Ser-2067–Asn-2143, Asn-2267–Gly-2294, Ser-2307–Gln-2343, Gln-2372–Met-2391, Gln-2429–Tyr-2448, and Gln-2496–Trp-2620. Residues Ala-1917–Ser-1946 show a composition bias toward low complexity. The segment covering Ile-1982–Pro-1993 has biased composition (polar residues). Low complexity-rich tracts occupy residues Ser-1994–Asp-2006, Ser-2067–Gln-2078, and Ser-2100–Ser-2118. 2 stretches are compositionally biased toward polar residues: residues Asn-2267 to Pro-2286 and Arg-2325 to Ile-2339. Residues Ser-2505–Arg-2528 show a composition bias toward polar residues. The span at Arg-2535–Pro-2547 shows a compositional bias: pro residues. A compositionally biased stretch (polar residues) spans Ser-2552–Thr-2565. Composition is skewed to low complexity over residues Ser-2566–Gln-2588 and Gln-2597–Trp-2620.

The protein belongs to the mask family.

The protein localises to the cytoplasm. The sequence is that of Ankyrin repeat and KH domain-containing protein mask-1 from Caenorhabditis elegans.